A 1406-amino-acid chain; its full sequence is DNA topoisomerase 2 (1406 aa).

Residues asparagine 69, asparagine 98, 126–128 (SSN), and 139–146 (GRNGYGAK) each bind ATP. Positions 332 to 334 (KKK) are interaction with DNA. An ATP-binding site is contributed by 363 to 365 (QTK). The Toprim domain maps to 441 to 555 (CTLILTEGDS…GLLDIPGFLI (115 aa)). 3 residues coordinate Mg(2+): glutamate 447, aspartate 524, and aspartate 526. The region spanning 690-1159 (IPSVLDGFKP…SAKDLWNNDL (470 aa)) is the Topo IIA-type catalytic domain. Catalysis depends on tyrosine 780, which acts as the O-(5'-phospho-DNA)-tyrosine intermediate. Residues 963 to 972 (KLISPISLQN) are interaction with DNA. The span at 1079-1089 (EDEDEDLEESE) shows a compositional bias: acidic residues. Disordered regions lie at residues 1079 to 1106 (EDEDEDLEESEEATRKKDKDDESTVNGP), 1183 to 1215 (KTKGGKRKRKGGDDDDYDPSGKKKPARRIKKIK), 1230 to 1287 (KIKA…DESG), and 1303 to 1406 (DEDA…FNDE). Residues 1090 to 1100 (EATRKKDKDDE) show a composition bias toward basic and acidic residues. The span at 1204–1214 (KKKPARRIKKI) shows a compositional bias: basic residues. Positions 1261-1274 (DVTSNASTPSTTIF) are enriched in polar residues. Positions 1326–1336 (AKKKAPPKRKA) are enriched in basic residues. Acidic residues-rich tracts occupy residues 1341-1359 (SSEDELSDANLSEQDDEEV) and 1381-1406 (EISDEEDFIDDDEDEEVDSDESFNDE).

It belongs to the type II topoisomerase family. Homodimer. It depends on Mg(2+) as a cofactor. Requires Mn(2+) as cofactor. Ca(2+) is required as a cofactor.

The protein localises to the nucleus. The catalysed reaction is ATP-dependent breakage, passage and rejoining of double-stranded DNA.. Its function is as follows. Control of topological states of DNA by transient breakage and subsequent rejoining of DNA strands. Topoisomerase II makes double-strand breaks. This Candida glabrata (strain ATCC 2001 / BCRC 20586 / JCM 3761 / NBRC 0622 / NRRL Y-65 / CBS 138) (Yeast) protein is DNA topoisomerase 2 (TOP2).